The sequence spans 323 residues: Formimidoylglutamase (323 aa).

Residues H131, D157, H159, D161, C245, and D247 each coordinate Mn(2+).

This sequence belongs to the arginase family. It depends on Mn(2+) as a cofactor.

The catalysed reaction is N-formimidoyl-L-glutamate + H2O = formamide + L-glutamate. The protein operates within amino-acid degradation; L-histidine degradation into L-glutamate; L-glutamate from N-formimidoyl-L-glutamate (hydrolase route): step 1/1. In terms of biological role, catalyzes the conversion of N-formimidoyl-L-glutamate to L-glutamate and formamide. The sequence is that of Formimidoylglutamase from Geobacillus kaustophilus (strain HTA426).